Reading from the N-terminus, the 1512-residue chain is Mitogen-activated protein kinase kinase kinase 1 (1512 aa).

Residues 1 to 13 (MAAAAGNRASSSG) show a composition bias toward low complexity. Disordered regions lie at residues 1–37 (MAAA…SSAP), 67–181 (SVEL…DRPE), and 213–304 (VKPI…PEET). Ala2 carries the N-acetylalanine modification. Residues Ser21 and Ser35 each carry the phosphoserine modification. Composition is skewed to low complexity over residues 81–99 (AASP…ADAA), 129–142 (AAPD…AAAE), and 150–160 (AAEPSPAAAPA). Ser137 and Ser154 each carry phosphoserine. Positions 162–181 (REMENKETLKGLHKMDDRPE) are enriched in basic and acidic residues. Over residues 250 to 260 (SPSPGNSPSGR) the composition is skewed to low complexity. Ser275 bears the Phosphoserine mark. The residue at position 285 (Thr285) is a Phosphothreonine. Residues Ser292, Ser297, and Ser300 each carry the phosphoserine modification. The SWIM-type zinc finger occupies 338-366 (YRVFIGPQNCSCARGTFCIHLLFVMLRVF). Residues 416-433 (SNSHTLSSSSTSTSSSEN) are compositionally biased toward low complexity. Residues 416 to 436 (SNSHTLSSSSTSTSSSENSIK) are disordered. The RING-type zinc finger occupies 443–492 (CPICLLGMLDEESLTVCEDGCRNKLHHHCMSIWAEECRRNREPLICPLCR). Phosphoserine occurs at positions 507 and 531. Disordered regions lie at residues 511-532 (SPSS…AGSR) and 602-624 (STGN…GSSQ). The segment covering 611–624 (GSSPSGGATSGSSQ) has biased composition (low complexity). Ser923 is subject to Phosphoserine. A disordered region spans residues 933-972 (SISVGPSSSTTTTTTTTEQPKPMVQTKGRPHSQCLNSSPL). The segment covering 939-949 (SSSTTTTTTTT) has biased composition (low complexity). The residue at position 1018 (Ser1018) is a Phosphoserine. Residues 1032-1041 (NCPENKDSDK) are compositionally biased toward basic and acidic residues. The disordered stretch occupies residues 1032-1087 (NCPENKDSDKLSPVFTQSRPLPSSNIHRPKPSRPTPGNTSKQGDPSKNSMTLDLNS). Ser1043 is subject to Phosphoserine. Composition is skewed to polar residues over residues 1045–1057 (VFTQ…SSNI) and 1066–1087 (TPGN…DLNS). The 266-residue stretch at 1243–1508 (WLKGQQIGLG…SRELLKHPVF (266 aa)) folds into the Protein kinase domain. Residues 1249-1257 (IGLGAFSSC) and Lys1272 each bind ATP. Residue Asp1369 is the Proton acceptor of the active site. Residues Thr1400 and Thr1412 each carry the phosphothreonine; by autocatalysis modification.

It belongs to the protein kinase superfamily. STE Ser/Thr protein kinase family. MAP kinase kinase kinase subfamily. In terms of assembly, binds both upstream activators and downstream substrates in multimolecular complexes through its N-terminus. Oligomerizes after binding MAP2K4 or TRAF2. Interacts with AXIN1. Interacts (via the kinase catalytic domain) with STK38. Interacts with GRIPAP1. It depends on Mg(2+) as a cofactor. Autophosphorylated.

The enzyme catalyses L-seryl-[protein] + ATP = O-phospho-L-seryl-[protein] + ADP + H(+). The catalysed reaction is L-threonyl-[protein] + ATP = O-phospho-L-threonyl-[protein] + ADP + H(+). It carries out the reaction S-ubiquitinyl-[E2 ubiquitin-conjugating enzyme]-L-cysteine + [acceptor protein]-L-lysine = [E2 ubiquitin-conjugating enzyme]-L-cysteine + N(6)-ubiquitinyl-[acceptor protein]-L-lysine.. Activated by autophosphorylation on Thr-1400 and Thr-1412 following oligomerization. Its function is as follows. Component of a protein kinase signal transduction cascade. Activates the ERK and JNK kinase pathways by phosphorylation of MAP2K1 and MAP2K4. May phosphorylate the MAPK8/JNK1 kinase. Activates CHUK and IKBKB, the central protein kinases of the NF-kappa-B pathway. This Homo sapiens (Human) protein is Mitogen-activated protein kinase kinase kinase 1 (MAP3K1).